A 305-amino-acid polypeptide reads, in one-letter code: Acyl transferase (305 aa).

Active-site charge relay system residues include Ser-114, Asp-211, and His-241.

Belongs to the LuxD family.

The protein operates within lipid metabolism; fatty acid reduction for biolumincescence. In terms of biological role, acyl transferase is part of the fatty acid reductase system required for aldehyde biosynthesis; it produces fatty acids for the luminescent reaction. The polypeptide is Acyl transferase (Vibrio campbellii (strain ATCC BAA-1116)).